The chain runs to 692 residues: Highly divergent homeobox (692 aa).

A DNA-binding region (homeobox 1) is located at residues 3–63 (LRSVFTVEQQ…NKRRKMSSKS (61 aa)). The span at 117–133 (SSSSKQGTTKHTNTQIT) shows a compositional bias: polar residues. The segment at 117–136 (SSSSKQGTTKHTNTQITEAH) is disordered. Glycyl lysine isopeptide (Lys-Gly) (interchain with G-Cter in SUMO2) cross-links involve residues K137, K142, K146, K165, K174, K196, K214, K223, and K234. Residues 437-500 (ALQDRTQFSD…NRRRKYRLMG (64 aa)) constitute a DNA-binding region (homeobox 2). Disordered stretches follow at residues 505 to 541 (PPRG…DNDR) and 647 to 692 (KDQQ…SDSL). Positions 676-692 (TSLSVSSLSEKNASDSL) are enriched in polar residues.

The protein localises to the nucleus. The polypeptide is Highly divergent homeobox (Hdx) (Mus musculus (Mouse)).